We begin with the raw amino-acid sequence, 939 residues long: Probable importin ECU10_0620 (939 aa).

The Importin N-terminal domain occupies alanine 23 to tyrosine 90.

This sequence belongs to the importin beta family.

The protein localises to the nucleus. It localises to the cytoplasm. In terms of biological role, active in protein import into the nucleus. The chain is Probable importin ECU10_0620 from Encephalitozoon cuniculi (strain GB-M1) (Microsporidian parasite).